A 637-amino-acid polypeptide reads, in one-letter code: ATP-dependent rRNA helicase SPB4 (637 aa).

Positions 14–42 match the Q motif motif; it reads WDTLNPPLSEWIRDAVATMGFDQMTPVQA. The Helicase ATP-binding domain occupies 45 to 247; it reads LPHFMGNKDV…RVGLRNPVKI (203 aa). 58-65 serves as a coordination point for ATP; the sequence is AVTGSGKT. The short motif at 195–198 is the DEAD box element; that stretch reads DEAD. Positions 283–438 constitute a Helicase C-terminal domain; that stretch reads ALAELLRQLP…TITTSEDDAA (156 aa). Residues 524-631 are a coiled coil; the sequence is KEKTREQQRK…AAAKQEKDGE (108 aa). 4 stretches are compositionally biased toward basic and acidic residues: residues 535–553, 563–576, 583–618, and 625–637; these read ALEEEKSGVKKQDKSEEFK, SAKHEKEDDRVERR, RDAEATSKMTDDEKVKQMELNDLIAEVRRQNREKAA, and KQEKDGEFKGFDD. The disordered stretch occupies residues 535–637; sequence ALEEEKSGVK…KDGEFKGFDD (103 aa).

It belongs to the DEAD box helicase family. DDX55/SPB4 subfamily. As to quaternary structure, component of pre-60S ribosomal complexes.

It localises to the nucleus. The protein localises to the nucleolus. It carries out the reaction ATP + H2O = ADP + phosphate + H(+). Functionally, ATP-binding RNA helicase involved in the biogenesis of 60S ribosomal subunits. Binds 90S pre-ribosomal particles and dissociates from pre-60S ribosomal particles after processing of 27SB pre-rRNA. Required for the normal formation of 18S rRNA through the processing of pre-rRNAs at sites A0, A1 and A2, and the normal formation of 25S and 5.8S rRNAs through the processing of pre-rRNAs at sites C1 and C2. The protein is ATP-dependent rRNA helicase SPB4 of Gibberella zeae (strain ATCC MYA-4620 / CBS 123657 / FGSC 9075 / NRRL 31084 / PH-1) (Wheat head blight fungus).